A 1264-amino-acid chain; its full sequence is BRCA2-interacting transcriptional repressor EMSY (1264 aa).

An interaction with BRCA2 region spans residues 1–442 (MPVVWPTLLD…LPKPVTATLP (442 aa)). Residues 16–114 (CKRILRKLEL…EWSIEGRRLV (99 aa)) enclose the ENT domain. The tract at residues 118–122 (PRLVP) is interaction with ZMYND11. The segment at 145–179 (PVPAETASKDGVSCSDEDEKPRKRRRTNSSSSSPV) is disordered. Thr-171 carries the phosphothreonine modification. Ser-173 and Ser-177 each carry phosphoserine. 2 O-linked (GlcNAc) serine glycosylation sites follow: Ser-192 and Ser-200. Residue Ser-202 is modified to Phosphoserine. An O-linked (GlcNAc) threonine glycan is attached at Thr-235. Over residues 364–406 (FPKQHQQSPKQQLQQVQQQTQQPVAQPSSVSQQQQPQQSALPP) the composition is skewed to low complexity. The tract at residues 364–407 (FPKQHQQSPKQQLQQVQQQTQQPVAQPSSVSQQQQPQQSALPPG) is disordered. Residues Thr-465 and Thr-470 are each glycosylated (O-linked (GlcNAc) threonine). O-linked (GlcNAc) serine glycosylation occurs at Ser-521. Polar residues predominate over residues 660–671 (SRVADASNSSAQ). Residues 660 to 700 (SRVADASNSSAQEGKEEPQGYTDSSSSSTESSQSSQDSQPV) are disordered. Positions 681–698 (TDSSSSSTESSQSSQDSQ) are enriched in low complexity. Phosphoserine is present on residues Ser-782 and Ser-785. Residue Thr-1069 is glycosylated (O-linked (GlcNAc) threonine). A Phosphoserine modification is found at Ser-1085. Residues 1232-1264 (QLDDDETAMEQDIDSSTEDGTEPSPSQSAVERS) are disordered. The span at 1233–1252 (LDDDETAMEQDIDSSTEDGT) shows a compositional bias: acidic residues. The segment covering 1254–1264 (PSPSQSAVERS) has biased composition (polar residues).

As to quaternary structure, homodimer. Interacts with the transactivation domain of BRCA2. Interacts with CBX1 (via chromoshadow domain). Interacts with ZMYND11. Does not interact with CBX3 or CBX5. Component of a nuclear receptor-mediated transcription complex composed of at least ZNF335, CCAR2 and EMSY; the complex stimulates the transcription of nuclear receptor target genes such as SOX9 and HOXA1. Within the complex interacts with CCAR2 and ZNF335. Components of this complex may associate with components of a histone methylation complex to form a complex at least composed of ZNF335, HCFC1, CCAR2, EMSY, MKI67, RBBP5, ASH2L and WDR5. Within this complex, interacts with ASH2L and RBBP5.

Its subcellular location is the nucleus. In terms of biological role, regulator which is able to repress transcription, possibly via its interaction with a multiprotein chromatin remodeling complex that modifies the chromatin. Its interaction with BRCA2 suggests that it may play a central role in the DNA repair function of BRCA2. Mediates ligand-dependent transcriptional activation by nuclear hormone receptors. In Mus musculus (Mouse), this protein is BRCA2-interacting transcriptional repressor EMSY.